The chain runs to 156 residues: MRNTTKQEDLIKAFKALLKEEKFSSQGEIVQALQELGFDSINQSKVSRMLTKFGAVRTRNAKMEMVYCLPAELGVPTTSSPLKNLVLDVDHNDAIVVIHTSPGAAQLIARLLDSLGKSEGILGTIAGDDTIFTTPAKGFAVEQLYAAILALFEQEL.

It belongs to the ArgR family.

It localises to the cytoplasm. The protein operates within amino-acid biosynthesis; L-arginine biosynthesis [regulation]. Functionally, regulates arginine biosynthesis genes. This chain is Arginine repressor, found in Edwardsiella ictaluri (strain 93-146).